Consider the following 298-residue polypeptide: MQLEKMITEGSNAASAEIDRVSTLEMCRIINDEDKTVPLAVERVLPDIAAAIDVIHTQVSGGGRLIYLGAGTSGRLGILDASECPPTYGVKPGLVVGLIAGGEYAIQHAVEGAEDSREGGVNDLKNINLTAQDVVVGIAASGRTPYVIAGLEYARQLGCRTVGISCNPGSAVSSTAEFAITPVVGAEVVTGSSRMKAGTAQKLVLNMLSTGLMIKSGKVFGNLMVDVVATNEKLHVRQVNIVKNATGCNAEQAEAALIACERNCKTAIVMVLKNLDADEAKKCLDQHGGFIRKALEKE.

One can recognise an SIS domain in the interval 55–218; that stretch reads IHTQVSGGGR…STGLMIKSGK (164 aa). The active-site Proton donor is the glutamate 83. The active site involves glutamate 114.

This sequence belongs to the GCKR-like family. MurNAc-6-P etherase subfamily. As to quaternary structure, homodimer.

It carries out the reaction N-acetyl-D-muramate 6-phosphate + H2O = N-acetyl-D-glucosamine 6-phosphate + (R)-lactate. The protein operates within amino-sugar metabolism; 1,6-anhydro-N-acetylmuramate degradation. It participates in amino-sugar metabolism; N-acetylmuramate degradation. Its pathway is cell wall biogenesis; peptidoglycan recycling. Its function is as follows. Specifically catalyzes the cleavage of the D-lactyl ether substituent of MurNAc 6-phosphate, producing GlcNAc 6-phosphate and D-lactate. Together with AnmK, is also required for the utilization of anhydro-N-acetylmuramic acid (anhMurNAc) either imported from the medium or derived from its own cell wall murein, and thus plays a role in cell wall recycling. This Escherichia coli O1:K1 / APEC protein is N-acetylmuramic acid 6-phosphate etherase.